The primary structure comprises 62 residues: Mu-elapitoxin-Na1a (62 aa).

4 cysteine pairs are disulfide-bonded: C3/C22, C15/C40, C44/C55, and C56/C61.

This sequence belongs to the three-finger toxin family. Short-chain subfamily. Orphan group XV sub-subfamily. As to expression, expressed by the venom gland.

Its subcellular location is the secreted. In terms of biological role, potent inhibitor of human Nav1.8/SCN10A (IC(50)=141-380 nM). Is highly selective for this channel and acts in a reversible manner. Shows a depolarizing shift of activation and hyperpolarizing shift of inactivation. In contrast to the very similar cytotoxin A5 (AC P62375), does not seem to bind integrin alpha-V/beta-3, since it does not promote or inhibit the proliferation of HUVECs and C-PAE cells. In vivo, in rodent models of inflammatory and neuropathic pain, it alleviates nociceptive behaviors more potently than does morphine. It displays no evident cytotoxic, hemolytic and cardiotoxic activities and produces no obvious adverse responses in mice even at a dose 30-fold higher than that producing a significant analgesic effect. The protein is Mu-elapitoxin-Na1a of Naja atra (Chinese cobra).